The sequence spans 240 residues: MATLFIADLHLCAEEPAITAGFLRFLAGEARKADALYILGDLFEAWIGDDDPNPLHHQMAAAIKAVSDSGVPCYFIHGNRDFLLGKRFARESGMTLLPEEKVLELYGRRVLIMHGDTLCTDDAGYQAFRAKVHKPWLQTLFLALPLFVRKRIAARMRANSKEANSSKSLAIMDVNQNAVVSAMEKHQVQWLIHGHTHRPAVHELIANQQTAFRVVLGAWHTEGSMVKVTADDVELIHFPF.

Mn(2+) contacts are provided by D8, H10, D41, N79, and H114. 79–80 (NR) serves as a coordination point for substrate. D122, S160, N164, K167, and H195 together coordinate substrate. Residues H195 and H197 each coordinate Mn(2+).

It belongs to the LpxH family. Mn(2+) serves as cofactor.

Its subcellular location is the cell inner membrane. It catalyses the reaction UDP-2-N,3-O-bis[(3R)-3-hydroxytetradecanoyl]-alpha-D-glucosamine + H2O = 2-N,3-O-bis[(3R)-3-hydroxytetradecanoyl]-alpha-D-glucosaminyl 1-phosphate + UMP + 2 H(+). The protein operates within glycolipid biosynthesis; lipid IV(A) biosynthesis; lipid IV(A) from (3R)-3-hydroxytetradecanoyl-[acyl-carrier-protein] and UDP-N-acetyl-alpha-D-glucosamine: step 4/6. In terms of biological role, hydrolyzes the pyrophosphate bond of UDP-2,3-diacylglucosamine to yield 2,3-diacylglucosamine 1-phosphate (lipid X) and UMP by catalyzing the attack of water at the alpha-P atom. Involved in the biosynthesis of lipid A, a phosphorylated glycolipid that anchors the lipopolysaccharide to the outer membrane of the cell. The sequence is that of UDP-2,3-diacylglucosamine hydrolase from Escherichia coli O6:H1 (strain CFT073 / ATCC 700928 / UPEC).